Here is a 189-residue protein sequence, read N- to C-terminus: FAS1 domain-containing protein mug57 (189 aa).

An N-terminal signal peptide occupies residues 1-24 (MMKLFCLNIFRFLYTTSFISAVLS). In terms of domain architecture, FAS1 spans 37–182 (EPRLFELLAE…GEMWVLNATL (146 aa)).

It localises to the cytoplasm. Its subcellular location is the nucleus. It is found in the membrane. Its function is as follows. Has a role in sporulation. The sequence is that of FAS1 domain-containing protein mug57 (mug57) from Schizosaccharomyces pombe (strain 972 / ATCC 24843) (Fission yeast).